Reading from the N-terminus, the 117-residue chain is MSRDFSRTVRVADQIQRELALLIQNEIMDPRVGMVTLTGVEVTRDYAYAKVFYTTLGGDENIQLVEEGLKHAAGFLRSQLAGKIRLRVVPQLQFVYDESVERGMKLSRLIDEAVGKA.

Belongs to the RbfA family. Monomer. Binds 30S ribosomal subunits, but not 50S ribosomal subunits or 70S ribosomes.

It localises to the cytoplasm. Its function is as follows. One of several proteins that assist in the late maturation steps of the functional core of the 30S ribosomal subunit. Associates with free 30S ribosomal subunits (but not with 30S subunits that are part of 70S ribosomes or polysomes). Required for efficient processing of 16S rRNA. May interact with the 5'-terminal helix region of 16S rRNA. This is Ribosome-binding factor A from Nitrosomonas europaea (strain ATCC 19718 / CIP 103999 / KCTC 2705 / NBRC 14298).